The sequence spans 270 residues: MRNGVVLFGLFFIGYSSCVLASLVEKSDVESTHAEQWDSNGKRTLQADDPERILAEERNMEQALLPAAEAIGKIKVSEKAVPRASLGSTLNPMKWPKRILDKVRLWLARIRLNLLKRTTVGEDSIDRAMMNGLTPFYLKKIKNDIMHYSSSVPHDKIKIEEDYDFYVKHFFGQFKGLYKDPPVFAVDKWNKLEEGMTKAEQNGNRRASDKVSRNIDKGLSIDQLFSLDISPFVYMRLLEKRGVFKDVENNMDKIDHLKDYVKVYKEHLMA.

The N-terminal stretch at 1 to 21 (MRNGVVLFGLFFIGYSSCVLA) is a signal peptide. Residues 43–58 (RTLQADDPERILAEER) carry the RxLR-dEER motif.

This sequence belongs to the RxLR effector family.

Its subcellular location is the secreted. It is found in the host nucleus. The protein localises to the host cytoplasm. In terms of biological role, secreted effector that completely suppresses the host cell death induced by cell death-inducing proteins. The polypeptide is Secreted RxLR effector protein 149 (Plasmopara viticola (Downy mildew of grapevine)).